The following is a 178-amino-acid chain: Cell wall-binding protein YwsB (178 aa).

A signal peptide spans 1-30 (MNKPTKLFSTLALAAGMTAAAAGGAGTIHA). 2 consecutive SH3b domains span residues 47-111 (IDSY…VKAA) and 116-178 (TKTK…HMTK).

It is found in the secreted. The protein resides in the cell wall. Increases in stationary phase in a strain lacking the WprA protease. This chain is Cell wall-binding protein YwsB (ywsB), found in Bacillus subtilis (strain 168).